The following is a 112-amino-acid chain: UPF0122 protein CPR_1686 (112 aa).

This sequence belongs to the UPF0122 family.

Might take part in the signal recognition particle (SRP) pathway. This is inferred from the conservation of its genetic proximity to ftsY/ffh. May be a regulatory protein. The chain is UPF0122 protein CPR_1686 from Clostridium perfringens (strain SM101 / Type A).